Here is a 281-residue protein sequence, read N- to C-terminus: Apulose-4-phosphate transketolase subunit A (281 aa).

The protein belongs to the transketolase family. Probable heterodimer composed of AptA and AptB. Thiamine diphosphate serves as cofactor.

It catalyses the reaction apulose 4-phosphate + D-glyceraldehyde 3-phosphate = D-xylulose 5-phosphate + dihydroxyacetone phosphate. The protein operates within carbohydrate metabolism. Its function is as follows. Involved in catabolism of D-apiose. Catalyzes the transfer of the glycolaldehyde group from apulose-4-phosphate to D-glyceraldehyde 3-phosphate, generating dihydroxyacetone phosphate and D-xylulose-5-phosphate. In Phocaeicola vulgatus (strain ATCC 8482 / DSM 1447 / JCM 5826 / CCUG 4940 / NBRC 14291 / NCTC 11154) (Bacteroides vulgatus), this protein is Apulose-4-phosphate transketolase subunit A.